A 155-amino-acid polypeptide reads, in one-letter code: MKIEVDSFSGSKIYPGRGTLFVRGDSKIFRFQSSKSASLFQQRKNPRRISWTVLYRRHHKKGISEEAAKKRTRKTVKHQRAIVGASLELIKERRSQKPSDRKAARDSKLAKDKEAKKAAKAARKAEKAKAVASGASVVSKQQAKGSFQKVKATSR.

A disordered region spans residues 87-155 (LELIKERRSQ…SFQKVKATSR (69 aa)). Positions 89 to 129 (LIKERRSQKPSDRKAARDSKLAKDKEAKKAAKAARKAEKAK) are enriched in basic and acidic residues. Residues 130–143 (AVASGASVVSKQQA) are compositionally biased toward low complexity.

Belongs to the eukaryotic ribosomal protein eL24 family. In terms of assembly, component of the large ribosomal subunit. Mature ribosomes consist of a small (40S) and a large (60S) subunit. The 40S subunit contains about 32 different proteins and 1 molecule of RNA (18S). The 60S subunit contains 45 different proteins and 3 molecules of RNA (25S, 5.8S and 5S).

The protein resides in the cytoplasm. Functionally, component of the ribosome, a large ribonucleoprotein complex responsible for the synthesis of proteins in the cell. The small ribosomal subunit (SSU) binds messenger RNAs (mRNAs) and translates the encoded message by selecting cognate aminoacyl-transfer RNA (tRNA) molecules. The large subunit (LSU) contains the ribosomal catalytic site termed the peptidyl transferase center (PTC), which catalyzes the formation of peptide bonds, thereby polymerizing the amino acids delivered by tRNAs into a polypeptide chain. The nascent polypeptides leave the ribosome through a tunnel in the LSU and interact with protein factors that function in enzymatic processing, targeting, and the membrane insertion of nascent chains at the exit of the ribosomal tunnel. In Candida albicans (strain SC5314 / ATCC MYA-2876) (Yeast), this protein is Large ribosomal subunit protein eL24.